Reading from the N-terminus, the 205-residue chain is Holliday junction branch migration complex subunit RuvA (205 aa).

A domain I region spans residues 1 to 64 (MIGKLKGIID…EDQIKLFGFR (64 aa)). The segment at 65 to 143 (TDTEREWFRL…ALSAVDPAVV (79 aa)) is domain II. Positions 144–154 (KLSGAIDDNRA) are flexible linker. Positions 154–205 (APRAVTDAISALVNLGYGQPQAAAAVATASRTAGEDAETAQLIKLGLKELSK) are domain III.

It belongs to the RuvA family. As to quaternary structure, homotetramer. Forms an RuvA(8)-RuvB(12)-Holliday junction (HJ) complex. HJ DNA is sandwiched between 2 RuvA tetramers; dsDNA enters through RuvA and exits via RuvB. An RuvB hexamer assembles on each DNA strand where it exits the tetramer. Each RuvB hexamer is contacted by two RuvA subunits (via domain III) on 2 adjacent RuvB subunits; this complex drives branch migration. In the full resolvosome a probable DNA-RuvA(4)-RuvB(12)-RuvC(2) complex forms which resolves the HJ.

The protein resides in the cytoplasm. Its function is as follows. The RuvA-RuvB-RuvC complex processes Holliday junction (HJ) DNA during genetic recombination and DNA repair, while the RuvA-RuvB complex plays an important role in the rescue of blocked DNA replication forks via replication fork reversal (RFR). RuvA specifically binds to HJ cruciform DNA, conferring on it an open structure. The RuvB hexamer acts as an ATP-dependent pump, pulling dsDNA into and through the RuvAB complex. HJ branch migration allows RuvC to scan DNA until it finds its consensus sequence, where it cleaves and resolves the cruciform DNA. This is Holliday junction branch migration complex subunit RuvA from Rhodopseudomonas palustris (strain TIE-1).